The following is a 556-amino-acid chain: Butanoate--CoA ligase AAE1 (556 aa).

A Microbody targeting signal motif is present at residues 554–556 (SKL).

It belongs to the ATP-dependent AMP-binding enzyme family. In terms of tissue distribution, expressed in roots, leaves, stems, flowers and developing seeds.

The protein resides in the peroxisome. It carries out the reaction butanoate + ATP + CoA = butanoyl-CoA + AMP + diphosphate. The enzyme catalyses hexanoate + ATP + CoA = hexanoyl-CoA + AMP + diphosphate. It catalyses the reaction pentanoate + ATP + CoA = pentanoyl-CoA + AMP + diphosphate. The catalysed reaction is 4-methylpentanoate + ATP + CoA = 4-methylpentanoyl-CoA + AMP + diphosphate. In terms of biological role, catalyzes the ligation of CoA on butanoate to produce butanoyl-CoA. Can also use hexanoate, pentanoate and 4-methylpentanoate as substrates with a lower efficiency. This Arabidopsis thaliana (Mouse-ear cress) protein is Butanoate--CoA ligase AAE1.